The sequence spans 146 residues: Ribonuclease H (146 aa).

Residues 1-143 (MEKKVTIYTD…CDELARLAVR (143 aa)) form the RNase H type-1 domain. Residues Asp-10, Glu-48, Asp-70, and Asp-135 each coordinate Mg(2+).

The protein belongs to the RNase H family. Monomer. It depends on Mg(2+) as a cofactor.

Its subcellular location is the cytoplasm. It carries out the reaction Endonucleolytic cleavage to 5'-phosphomonoester.. Its function is as follows. Endonuclease that specifically degrades the RNA of RNA-DNA hybrids. In Chlorobium phaeovibrioides (strain DSM 265 / 1930) (Prosthecochloris vibrioformis (strain DSM 265)), this protein is Ribonuclease H.